The following is a 306-amino-acid chain: GTP-binding protein RAD (306 aa).

Residues Met-1–Arg-13 show a composition bias toward gly residues. The segment at Met-1–Tyr-91 is disordered. An Omega-N-methylarginine modification is found at Arg-23. At Ser-25 the chain carries Phosphoserine. Over residues Ala-56 to Asp-88 the composition is skewed to low complexity. GTP contacts are provided by residues Gly-97–Ser-104 and Asn-201–Asp-204. The calmodulin-binding stretch occupies residues Ala-276–Ala-295.

This sequence belongs to the small GTPase superfamily. RGK family. In terms of assembly, interacts with Calmodulin preferentially in the inactive, GDP-bound form. Interacts with CAMK2D. Interacts with CACNB2; interaction may be involved in beta-adrenergic regulation of heart rate and contractile force. Interaction with CACNB2 regulates the trafficking of CACNA1C to the cell membrane.

It localises to the cell membrane. In terms of biological role, may regulate basal voltage-dependent L-type Ca(2+) currents and be required for beta-adrenergic augmentation of Ca(2+) influx in cardiomyocytes, thereby regulating increases in heart rate and contractile force. May play an important role in cardiac antiarrhythmia via the strong suppression of voltage-dependent L-type Ca(2+) currents. Regulates voltage-gated L-type calcium channel subunit alpha-1C trafficking to the cell membrane. Inhibits cardiac hypertrophy through the calmodulin-dependent kinase II (CaMKII) pathway. Inhibits phosphorylation and activation of CAMK2D. The polypeptide is GTP-binding protein RAD (Rrad) (Rattus norvegicus (Rat)).